A 254-amino-acid polypeptide reads, in one-letter code: Mannose-binding protein (254 aa).

An N-terminal signal peptide occupies residues 1–19; sequence MTLLQPFSALLLCLSLMMA. Residues 46 to 99 are disordered; it reads NGLPGRDGRDGPKGEKGDPGEGLRGLQGLPGKAGPQGLKGEVGPQGEKGQKGER. Residues 51 to 66 show a composition bias toward basic and acidic residues; sequence RDGRDGPKGEKGDPGE. At Pro57 the chain carries 4-hydroxyproline. 5-hydroxylysine occurs at positions 58 and 61. Residues Lys58 and Lys61 are each glycosylated (O-linked (Gal...) hydroxylysine). Position 75 is a 4-hydroxyproline (Pro75). 5-hydroxylysine is present on residues Lys93 and Lys96. The C-type lectin domain occupies 140-250; the sequence is VGKKMFVSTG…LDCSNSNIFI (111 aa). 2 disulfide bridges follow: Cys161-Cys252 and Cys229-Cys243.

As to quaternary structure, oligomeric complex of 3 or more homotrimers.

It localises to the secreted. Its function is as follows. Calcium-dependent lectin involved in innate immune defense. Binds mannose, fucose and N-acetylglucosamine on different microorganisms and activates the lectin complement pathway. The protein is Mannose-binding protein of Gallus gallus (Chicken).